The chain runs to 157 residues: uncharacterized protein (157 aa).

Residues 9 to 154 (LLINYKTLDE…ETNLNAVTNE (146 aa)) form the N-acetyltransferase domain.

This is an uncharacterized protein from Bacillus cereus (strain G9842).